Reading from the N-terminus, the 682-residue chain is Polycomb protein suz12-B (682 aa).

The segment at 326–355 is disordered; that stretch reads DPSDPSTAPVAKPLSTRNSDTSTTESRIST. The span at 340–354 shows a compositional bias: polar residues; sequence STRNSDTSTTESRIS. Residues 408–431 form a C2H2-type zinc finger; that stretch reads LHCPWCTLNCRKLYSLLKHLKLSH. A VEFS-box region spans residues 523–599; that stretch reads RLYFHSDSCM…NQMSQASMLF (77 aa).

The protein belongs to the VEFS (VRN2-EMF2-FIS2-SU(Z)12) family. Component of the prc2/eed-ezh2 complex.

The protein localises to the nucleus. Its function is as follows. Polycomb group (PcG) protein. Component of the prc2/eed-ezh2 complex, which methylates 'Lys-9' and 'Lys-27' of histone H3, leading to transcriptional repression of the affected target gene. The chain is Polycomb protein suz12-B (suz12b) from Danio rerio (Zebrafish).